Here is a 175-residue protein sequence, read N- to C-terminus: 6,7-dimethyl-8-ribityllumazine synthase (175 aa).

5-amino-6-(D-ribitylamino)uracil is bound by residues F24, 58-60 (ALE), and 82-84 (AVI). 87–88 (ET) serves as a coordination point for (2S)-2-hydroxy-3-oxobutyl phosphate. Catalysis depends on H90, which acts as the Proton donor. N115 provides a ligand contact to 5-amino-6-(D-ribitylamino)uracil. R129 lines the (2S)-2-hydroxy-3-oxobutyl phosphate pocket. A disordered region spans residues 150–175 (ALEPEEDDEDEDDEDEDFDDEEDDGR). Residues 152–175 (EPEEDDEDEDDEDEDFDDEEDDGR) are compositionally biased toward acidic residues.

The protein belongs to the DMRL synthase family.

The enzyme catalyses (2S)-2-hydroxy-3-oxobutyl phosphate + 5-amino-6-(D-ribitylamino)uracil = 6,7-dimethyl-8-(1-D-ribityl)lumazine + phosphate + 2 H2O + H(+). It participates in cofactor biosynthesis; riboflavin biosynthesis; riboflavin from 2-hydroxy-3-oxobutyl phosphate and 5-amino-6-(D-ribitylamino)uracil: step 1/2. Catalyzes the formation of 6,7-dimethyl-8-ribityllumazine by condensation of 5-amino-6-(D-ribitylamino)uracil with 3,4-dihydroxy-2-butanone 4-phosphate. This is the penultimate step in the biosynthesis of riboflavin. This is 6,7-dimethyl-8-ribityllumazine synthase from Bordetella bronchiseptica (strain ATCC BAA-588 / NCTC 13252 / RB50) (Alcaligenes bronchisepticus).